We begin with the raw amino-acid sequence, 652 residues long: Phosphomethylpyrimidine synthase (652 aa).

2 disordered regions span residues 1 to 45 and 118 to 166; these read MVSR…SVSA and QRGD…LDGR. A compositionally biased stretch (low complexity) spans 8–45; the sequence is SSSSTSKAVTSSPSTSSLSSAASSPSVSSSSSSSSVSA. Gly residues predominate over residues 134–162; that stretch reads GASGPGTLGSGTPGSGTPGSGPLGLGGTD. Residues Asn-245, Met-274, Tyr-303, His-339, 359–361, 400–403, and Glu-439 each bind substrate; these read SRG and DGLR. His-443 provides a ligand contact to Zn(2+). A substrate-binding site is contributed by Tyr-466. Residue His-507 participates in Zn(2+) binding. [4Fe-4S] cluster is bound by residues Cys-587, Cys-590, and Cys-595.

It belongs to the ThiC family. The cofactor is [4Fe-4S] cluster.

It carries out the reaction 5-amino-1-(5-phospho-beta-D-ribosyl)imidazole + S-adenosyl-L-methionine = 4-amino-2-methyl-5-(phosphooxymethyl)pyrimidine + CO + 5'-deoxyadenosine + formate + L-methionine + 3 H(+). It participates in cofactor biosynthesis; thiamine diphosphate biosynthesis. Functionally, catalyzes the synthesis of the hydroxymethylpyrimidine phosphate (HMP-P) moiety of thiamine from aminoimidazole ribotide (AIR) in a radical S-adenosyl-L-methionine (SAM)-dependent reaction. The sequence is that of Phosphomethylpyrimidine synthase from Frankia casuarinae (strain DSM 45818 / CECT 9043 / HFP020203 / CcI3).